Here is a 255-residue protein sequence, read N- to C-terminus: NAD-dependent protein deacylase (255 aa).

The 253-residue stretch at 1 to 253 folds into the Deacetylase sirtuin-type domain; sequence MIEEAPRIIA…VKVKRCLENK (253 aa). Residue 20–39 participates in NAD(+) binding; sequence GAGVSAESGIPTFRDRGGLW. Residues Y64 and R67 each contribute to the substrate site. Residue 98 to 101 coordinates NAD(+); sequence QNID. The Proton acceptor role is filled by H116. Zn(2+) contacts are provided by C124, C127, C151, and C154. Residues 191–193, 217–219, and A235 contribute to the NAD(+) site; these read GTS and NTK.

It belongs to the sirtuin family. Class III subfamily. Requires Zn(2+) as cofactor.

The protein localises to the cytoplasm. It catalyses the reaction N(6)-acetyl-L-lysyl-[protein] + NAD(+) + H2O = 2''-O-acetyl-ADP-D-ribose + nicotinamide + L-lysyl-[protein]. It carries out the reaction N(6)-succinyl-L-lysyl-[protein] + NAD(+) + H2O = 2''-O-succinyl-ADP-D-ribose + nicotinamide + L-lysyl-[protein]. Functionally, NAD-dependent lysine deacetylase and desuccinylase that specifically removes acetyl and succinyl groups on target proteins. Modulates the activities of several proteins which are inactive in their acylated form. Deacetylates the N-terminal lysine residue of Alba, the major archaeal chromatin protein and that, in turn, increases Alba's DNA binding affinity, thereby repressing transcription. The sequence is that of NAD-dependent protein deacylase from Thermococcus sibiricus (strain DSM 12597 / MM 739).